We begin with the raw amino-acid sequence, 111 residues long: Small ribosomal subunit protein bS16 (111 aa).

This sequence belongs to the bacterial ribosomal protein bS16 family.

This Rickettsia typhi (strain ATCC VR-144 / Wilmington) protein is Small ribosomal subunit protein bS16.